Consider the following 322-residue polypeptide: Protease HtpX homolog (322 aa).

2 helical membrane passes run 19-39 and 61-81; these read ILLI…CYLL and FINL…IAYF. His-165 lines the Zn(2+) pocket. Glu-166 is a catalytic residue. His-169 is a binding site for Zn(2+). A run of 2 helical transmembrane segments spans residues 175–195 and 216–236; these read VRLL…AQIA and ILIL…ATLM. Glu-245 lines the Zn(2+) pocket.

Belongs to the peptidase M48B family. Zn(2+) is required as a cofactor.

It is found in the cell inner membrane. In Bacteroides fragilis (strain YCH46), this protein is Protease HtpX homolog.